Reading from the N-terminus, the 224-residue chain is UPF0758 protein CJA_3522 (224 aa).

The MPN domain occupies 102 to 224 (LLSSPHLVRD…LVSLAERGWL (123 aa)). Positions 173, 175, and 186 each coordinate Zn(2+). Positions 173–186 (HNHPSGLAEPSQAD) match the JAMM motif motif.

The protein belongs to the UPF0758 family.

The chain is UPF0758 protein CJA_3522 from Cellvibrio japonicus (strain Ueda107) (Pseudomonas fluorescens subsp. cellulosa).